The primary structure comprises 436 residues: Transcription factor MYB124 (436 aa).

A compositionally biased stretch (basic residues) spans Met-1 to Asn-11. Positions Met-1 to Arg-23 are disordered. A Nuclear localization signal 1 motif is present at residues Lys-8–Asn-15. 2 HTH myb-type domains span residues Lys-20–Leu-71 and Asn-72–Ala-126. 2 DNA-binding regions (H-T-H motif) span residues Trp-48 to Leu-71 and Trp-99 to Cys-122. Residues Pro-151–Thr-158 carry the Nuclear localization signal 2 motif. The interval Ser-309–Ser-328 is disordered. Polar residues predominate over residues Pro-319–Ser-328.

Interacts with RBR1. In terms of tissue distribution, expressed in all shoot organs with higher levels in leaves, stems, flowers, siliques and floral buds. Also detected in roots tips.

The protein localises to the nucleus. Transcription factor that binds to DNA in promoters cis-regulatory element 5'-GGCGCGC-3' of cell cycle genes, including cyclins, cyclin-dependent kinases (CDKs), and components of the pre-replication complex. Binds to DNA in promoters cis-regulatory element 5'-AGCCG-3' of auxin regulated genes (e.g. PIN3 and PIN7). Together with FAMA and MYB88, ensures that stomata contain just two guard cells (GCs) by enforcing a single symmetric precursor cell division before stomatal maturity. Represses the expression of the mitosis-inducing factors CDKB1-1 and CDKA-1, specifically required for the last guard mother cells (GMC) symmetric divisions in the stomatal pathway. Represses CYCA2-3 in newly formed guard cells. Together with MYB88, regulates stomata spacing by restricting divisions late in the stomatal cell lineage thus limiting the number of GMC divisions. In collaboration with CDKB1-1 and CDKB1-2, restrict the G1/S transition and chloroplast and nuclear number during stomatal formation, and normally maintain fate and developmental progression throughout the stomatal cell lineage. Also involved in the shape regulation of pavement cells. Involved in sensing and/or transducing abiotic stress (e.g. drought and salt), probably via the positive regulation of NAC019. Regulates female reproduction being required for entry into megasporogenesis, probably via the regulation of cell cycle genes. Promotes histone H3K27me3 marks and represses stem cell gene expression. Required for lateral roots (LRs) initiation via the regulation of PIN3 expression in an auxin-dependent manner. Involved in responses to gravity stimulation in primary roots by regulating the transcription of PIN3 and PIN7 in gravity-sensing cells, thus modulating auxin asymmetric redistribution. The polypeptide is Transcription factor MYB124 (Arabidopsis thaliana (Mouse-ear cress)).